Consider the following 387-residue polypeptide: GTPase Obg (387 aa).

The Obg domain occupies Met1–Leu159. Positions Ala160–Ala333 constitute an OBG-type G domain. GTP is bound by residues Gly166–Ser173, Phe191–Val195, Asp213–Gly216, Asn283–Asp286, and Ser314–Tyr316. Mg(2+) is bound by residues Ser173 and Thr193.

Belongs to the TRAFAC class OBG-HflX-like GTPase superfamily. OBG GTPase family. In terms of assembly, monomer. It depends on Mg(2+) as a cofactor.

The protein resides in the cytoplasm. Functionally, an essential GTPase which binds GTP, GDP and possibly (p)ppGpp with moderate affinity, with high nucleotide exchange rates and a fairly low GTP hydrolysis rate. Plays a role in control of the cell cycle, stress response, ribosome biogenesis and in those bacteria that undergo differentiation, in morphogenesis control. The protein is GTPase Obg of Shewanella halifaxensis (strain HAW-EB4).